Consider the following 203-residue polypeptide: MSRYTGPSWKRSRRLGISLSGTGKEISRRNYAPGDHGPNNRAKVSEYGQQLKEKQKLRWMFGLNERQFQNLFIRAGKIREGKHGVNFMALLERRLDNIVYRLGLASTREQARQLVNHGHILVDGKRVDIPSYEVKVGQEISLRDKSKNLQQVKDALDAVVSRPPFVSFDDSKMTGTLVRLPERDEMEPEVDEALIVEWYNKKL.

The S4 RNA-binding domain maps to 93–153 (RRLDNIVYRL…DKSKNLQQVK (61 aa)).

Belongs to the universal ribosomal protein uS4 family. Part of the 30S ribosomal subunit. Contacts protein S5. The interaction surface between S4 and S5 is involved in control of translational fidelity.

In terms of biological role, one of the primary rRNA binding proteins, it binds directly to 16S rRNA where it nucleates assembly of the body of the 30S subunit. With S5 and S12 plays an important role in translational accuracy. The chain is Small ribosomal subunit protein uS4 from Lactobacillus gasseri (strain ATCC 33323 / DSM 20243 / BCRC 14619 / CIP 102991 / JCM 1131 / KCTC 3163 / NCIMB 11718 / NCTC 13722 / AM63).